The primary structure comprises 535 residues: CTP synthase (535 aa).

Positions 1–267 are amidoligase domain; that stretch reads MTKYIFVTGG…DQIVCDHLKL (267 aa). Ser13 is a CTP binding site. A UTP-binding site is contributed by Ser13. 14–19 serves as a coordination point for ATP; sequence SLGKGI. Tyr54 is an L-glutamine binding site. Asp71 provides a ligand contact to ATP. Asp71 and Glu141 together coordinate Mg(2+). Residues 148–150, 188–193, and Lys224 each bind CTP; these read DIE and KTKPTQ. UTP-binding positions include 188–193 and Lys224; that span reads KTKPTQ. The region spanning 292–534 is the Glutamine amidotransferase type-1 domain; that stretch reads RIALVGKYVE…VQASITNKES (243 aa). Residue Gly354 coordinates L-glutamine. Catalysis depends on Cys381, which acts as the Nucleophile; for glutamine hydrolysis. L-glutamine is bound by residues 382–385, Glu405, and Arg462; that span reads LGMQ. Active-site residues include His507 and Glu509.

The protein belongs to the CTP synthase family. Homotetramer.

The catalysed reaction is UTP + L-glutamine + ATP + H2O = CTP + L-glutamate + ADP + phosphate + 2 H(+). It catalyses the reaction L-glutamine + H2O = L-glutamate + NH4(+). The enzyme catalyses UTP + NH4(+) + ATP = CTP + ADP + phosphate + 2 H(+). The protein operates within pyrimidine metabolism; CTP biosynthesis via de novo pathway; CTP from UDP: step 2/2. Allosterically activated by GTP, when glutamine is the substrate; GTP has no effect on the reaction when ammonia is the substrate. The allosteric effector GTP functions by stabilizing the protein conformation that binds the tetrahedral intermediate(s) formed during glutamine hydrolysis. Inhibited by the product CTP, via allosteric rather than competitive inhibition. Catalyzes the ATP-dependent amination of UTP to CTP with either L-glutamine or ammonia as the source of nitrogen. Regulates intracellular CTP levels through interactions with the four ribonucleotide triphosphates. The sequence is that of CTP synthase from Bacillus cytotoxicus (strain DSM 22905 / CIP 110041 / 391-98 / NVH 391-98).